The primary structure comprises 225 residues: Ribonuclease HII (225 aa).

Residues Gly35–Asp225 form the RNase H type-2 domain. Residues Asp41, Glu42, and Asp137 each contribute to the a divalent metal cation site.

Belongs to the RNase HII family. It depends on Mn(2+) as a cofactor. Mg(2+) is required as a cofactor.

It localises to the cytoplasm. The enzyme catalyses Endonucleolytic cleavage to 5'-phosphomonoester.. Functionally, endonuclease that specifically degrades the RNA of RNA-DNA hybrids. This is Ribonuclease HII from Trichormus variabilis (strain ATCC 29413 / PCC 7937) (Anabaena variabilis).